The sequence spans 333 residues: uncharacterized protein (333 aa).

This is an uncharacterized protein from Gallus gallus (Chicken).